Consider the following 340-residue polypeptide: Glyceraldehyde-3-phosphate dehydrogenase (340 aa).

NAD(+) contacts are provided by residues 11–12 (TI) and Gly109. Position 138 to 140 (138 to 140 (SCN)) interacts with D-glyceraldehyde 3-phosphate. The active-site Nucleophile is the Cys139. Arg167 lines the NAD(+) pocket. Position 193-194 (193-194 (HA)) interacts with D-glyceraldehyde 3-phosphate. Gln300 is an NAD(+) binding site.

Belongs to the glyceraldehyde-3-phosphate dehydrogenase family. As to quaternary structure, homotetramer.

The protein resides in the cytoplasm. It catalyses the reaction D-glyceraldehyde 3-phosphate + phosphate + NADP(+) = (2R)-3-phospho-glyceroyl phosphate + NADPH + H(+). The enzyme catalyses D-glyceraldehyde 3-phosphate + phosphate + NAD(+) = (2R)-3-phospho-glyceroyl phosphate + NADH + H(+). The protein operates within carbohydrate degradation; glycolysis; pyruvate from D-glyceraldehyde 3-phosphate: step 1/5. This is Glyceraldehyde-3-phosphate dehydrogenase from Saccharolobus islandicus (strain L.S.2.15 / Lassen #1) (Sulfolobus islandicus).